The chain runs to 642 residues: Zinc finger protein 14 (642 aa).

The KRAB domain maps to 4–76 (VSFEDVAVNF…MVERLCESRR (73 aa)). Residues 103–125 (HECSFCGRDFIHHSSLNRHMRSH) form a C2H2-type 1 zinc finger. The segment at 141–163 (CKCKAVGKTFSYHHCFRKHERTH) adopts a C2H2-type 2; degenerate zinc-finger fold. The segment at 169-191 (YECKQCGKAFIYYQPFQRHERTH) adopts a C2H2-type 3 zinc-finger fold. A C2H2-type 4; atypical zinc finger spans residues 197-217 (YECKQCGKTFIYYQSFQKHAH). C2H2-type zinc fingers lie at residues 223-245 (YECK…KRTH), 251-273 (YECK…ERTH), 279-301 (YKCK…KRTH), 307-329 (YECK…VIIH), 335-357 (YKCK…ERTH), 363-385 (YECK…ERTH), 391-413 (YECK…ETTH), 419-441 (YECK…ERTH), 447-469 (YECK…ERSH), 475-497 (YECK…ERTH), 503-525 (YECK…EKIH), 531-553 (FECK…ERTH), 559-581 (YQCK…ERTH), 587-609 (YRCK…ERSH), and 615-637 (YECK…ERTH).

Belongs to the krueppel C2H2-type zinc-finger protein family.

It localises to the nucleus. In terms of biological role, may be involved in transcriptional regulation. This Homo sapiens (Human) protein is Zinc finger protein 14 (ZNF14).